Consider the following 283-residue polypeptide: Protein BASIC PENTACYSTEINE5 (283 aa).

The interval 51–86 (AVKERNEAVAATKEALASRDEALEQRDKALSERDNA) is alanine-zipper. Residues 63–89 (KEALASRDEALEQRDKALSERDNAIME) are a coiled coil. Positions 122–176 (EESHLPNPSPISTIPPEAANTRPTKRKKESKQGKKMGEDLNRPVASPGKKSRKDW) are disordered. Residues 151–162 (SKQGKKMGEDLN) show a composition bias toward basic and acidic residues.

It belongs to the BBR/BPC family. Homodimer. Heterodimer. In terms of tissue distribution, expressed in seedlings, leaves and pistils.

It localises to the nucleus. In terms of biological role, transcriptional regulator that specifically binds to GA-rich elements (GAGA-repeats) present in regulatory sequences of genes involved in developmental processes. The protein is Protein BASIC PENTACYSTEINE5 (BPC5) of Arabidopsis thaliana (Mouse-ear cress).